Reading from the N-terminus, the 700-residue chain is Long-chain-fatty-acid--CoA ligase 1 (700 aa).

The segment at 1–21 is disordered; the sequence is MVAQYTVPVGKAANEHETAPR. A Glycyl lysine isopeptide (Lys-Gly) (interchain with G-Cter in ubiquitin) cross-link involves residue Lys189. ATP is bound at residue 269 to 280; that stretch reads YTSGSTGEPKGV. Positions 531-580 match the FACS motif; the sequence is DGWFKTGDIGEWEANGHLKIIDRKKNLVKTMNGEYIALEKLESVYRSNEY.

It belongs to the ATP-dependent AMP-binding enzyme family. As to quaternary structure, interacts with FAT1. The cofactor is Mg(2+).

Its subcellular location is the lipid droplet. It localises to the cell membrane. The enzyme catalyses a long-chain fatty acid + ATP + CoA = a long-chain fatty acyl-CoA + AMP + diphosphate. The catalysed reaction is (9Z)-octadecenoate + ATP + CoA = (9Z)-octadecenoyl-CoA + AMP + diphosphate. It carries out the reaction hexadecanoate + ATP + CoA = hexadecanoyl-CoA + AMP + diphosphate. It catalyses the reaction (9Z)-hexadecenoate + ATP + CoA = (9Z)-hexadecenoyl-CoA + AMP + diphosphate. The enzyme catalyses tetradecanoate + ATP + CoA = tetradecanoyl-CoA + AMP + diphosphate. The catalysed reaction is (9Z)-tetradecenoate + ATP + CoA = (9Z)-tetradecenoyl-CoA + AMP + diphosphate. It carries out the reaction (9Z,12Z)-octadecadienoate + ATP + CoA = (9Z,12Z)-octadecadienoyl-CoA + AMP + diphosphate. It catalyses the reaction dodecanoate + ATP + CoA = dodecanoyl-CoA + AMP + diphosphate. The enzyme catalyses pentadecanoate + ATP + CoA = pentadecanoyl-CoA + AMP + diphosphate. The catalysed reaction is undecanoate + ATP + CoA = undecanoyl-CoA + AMP + diphosphate. It carries out the reaction heptadecanoate + ATP + CoA = heptadecanoyl-CoA + AMP + diphosphate. It catalyses the reaction octadecanoate + ATP + CoA = octadecanoyl-CoA + AMP + diphosphate. Activates long-chain fatty acids (LCFA) by esterification of the fatty acids into metabolically active CoA-thioesters for subsequent degradation or incorporation into phospholipids. Also facilitates the transport of LCFAs into the cell, either by active transport or by decreasing the intracellular LCFA concentration. It may supplement intracellular myristoyl-CoA pools from exogenous myristate. Preferentially acts on C12:0-C16:0 fatty acids with myristic and pentadecanic acid (C15:0) having the highest activities. Also involved in long-chain base (LCB) uptake of sphingolipids. In contrast ot LCFA uptake, LCB uptake does not require ATP, suggesting that the enzyme is directly involved in active LCB uptake. Involved in the sphingolipid-to-glycerolipid metabolic pathway, converting the sphingolipid metabolite hexadecenoic acid to hexadecenoyl-CoA, which is then further converted to glycerolipids. The polypeptide is Long-chain-fatty-acid--CoA ligase 1 (FAA1) (Saccharomyces cerevisiae (strain ATCC 204508 / S288c) (Baker's yeast)).